We begin with the raw amino-acid sequence, 337 residues long: Mitochondrial glutathione transporter SLC25A40 (337 aa).

Solcar repeat units follow at residues 14-132, 140-224, and 234-328; these read VTPL…LSAF, NETR…LKRW, and PTFM…GKSF. 6 helical membrane-spanning segments follow: residues 20–40, 104–124, 146–166, 200–221, 240–260, and 299–319; these read MIASCTGAVLTSLMVTPLDVV, LWSGLPPTLVMAIPATVIYFT, IVAGVVARFGAVTVISPLELI, WAPTILRDVPFSAMYWYNYENL, FTSGALSGSFAAVATLPFDVV, and GLFTGLIPRLVKIVPACAIMI.

The protein belongs to the mitochondrial carrier (TC 2.A.29) family.

It localises to the mitochondrion inner membrane. The catalysed reaction is glutathione(in) = glutathione(out). In terms of biological role, probable mitochondrial transporter required for glutathione import into mitochondria. Glutathione, which plays key roles in oxidative metabolism, is produced exclusively in the cytosol and is imported in many organelles. Mitochondrial glutathione is required for the activity and stability of proteins containing iron-sulfur clusters, as well as erythropoiesis. The protein is Mitochondrial glutathione transporter SLC25A40 of Mus musculus (Mouse).